The sequence spans 407 residues: Multifunctional CCA protein (407 aa).

ATP contacts are provided by G8 and R11. Residues G8 and R11 each coordinate CTP. Mg(2+) contacts are provided by D21 and D23. R91, R137, and R140 together coordinate ATP. CTP-binding residues include R91, R137, and R140. In terms of domain architecture, HD spans 228–329 (TGIHTLLVAE…VKIFNKLDVW (102 aa)).

This sequence belongs to the tRNA nucleotidyltransferase/poly(A) polymerase family. Bacterial CCA-adding enzyme type 1 subfamily. As to quaternary structure, monomer. Can also form homodimers and oligomers. The cofactor is Mg(2+). Requires Ni(2+) as cofactor.

The catalysed reaction is a tRNA precursor + 2 CTP + ATP = a tRNA with a 3' CCA end + 3 diphosphate. It carries out the reaction a tRNA with a 3' CCA end + 2 CTP + ATP = a tRNA with a 3' CCACCA end + 3 diphosphate. Its function is as follows. Catalyzes the addition and repair of the essential 3'-terminal CCA sequence in tRNAs without using a nucleic acid template. Adds these three nucleotides in the order of C, C, and A to the tRNA nucleotide-73, using CTP and ATP as substrates and producing inorganic pyrophosphate. tRNA 3'-terminal CCA addition is required both for tRNA processing and repair. Also involved in tRNA surveillance by mediating tandem CCA addition to generate a CCACCA at the 3' terminus of unstable tRNAs. While stable tRNAs receive only 3'-terminal CCA, unstable tRNAs are marked with CCACCA and rapidly degraded. The sequence is that of Multifunctional CCA protein from Vibrio vulnificus (strain YJ016).